The primary structure comprises 185 residues: Guanylate kinase (185 aa).

Positions 4 to 181 (GALYVVSGPS…ACNDLISIIE (178 aa)) constitute a Guanylate kinase-like domain. 11 to 18 (GPSGAGKS) is a binding site for ATP.

Belongs to the guanylate kinase family.

The protein resides in the cytoplasm. The enzyme catalyses GMP + ATP = GDP + ADP. In terms of biological role, essential for recycling GMP and indirectly, cGMP. The protein is Guanylate kinase of Fusobacterium nucleatum subsp. nucleatum (strain ATCC 25586 / DSM 15643 / BCRC 10681 / CIP 101130 / JCM 8532 / KCTC 2640 / LMG 13131 / VPI 4355).